Here is a 395-residue protein sequence, read N- to C-terminus: Putative 8-amino-7-oxononanoate synthase (395 aa).

Substrate is bound at residue R23. Position 110–111 (110–111) interacts with pyridoxal 5'-phosphate; that stretch reads GY. Substrate is bound at residue H135. Pyridoxal 5'-phosphate-binding positions include S182, 207–210, and 239–242; these read DEAH and TFSK. N6-(pyridoxal phosphate)lysine is present on K242. T356 serves as a coordination point for substrate.

This sequence belongs to the class-II pyridoxal-phosphate-dependent aminotransferase family. BioF subfamily. Homodimer. It depends on pyridoxal 5'-phosphate as a cofactor.

The enzyme catalyses 6-carboxyhexanoyl-[ACP] + L-alanine + H(+) = (8S)-8-amino-7-oxononanoate + holo-[ACP] + CO2. Its pathway is cofactor biosynthesis; biotin biosynthesis. In terms of biological role, catalyzes the decarboxylative condensation of pimeloyl-[acyl-carrier protein] and L-alanine to produce 8-amino-7-oxononanoate (AON), [acyl-carrier protein], and carbon dioxide. This is Putative 8-amino-7-oxononanoate synthase (bioF) from Bacillus mycoides (strain KBAB4) (Bacillus weihenstephanensis).